The chain runs to 34 residues: Photosystem II reaction center protein Psb30 (34 aa).

A helical membrane pass occupies residues 6 to 26 (VVFQLMALFFVLAAGPAVVVL).

The protein belongs to the Psb30/Ycf12 family. In terms of assembly, PSII is composed of 1 copy each of membrane proteins PsbA, PsbB, PsbC, PsbD, PsbE, PsbF, PsbH, PsbI, PsbJ, PsbK, PsbL, PsbM, PsbT, PsbX, PsbY, PsbZ, Psb30/Ycf12, peripheral proteins of the oxygen-evolving complex and a large number of cofactors. It forms dimeric complexes.

The protein resides in the plastid. It is found in the chloroplast thylakoid membrane. A core subunit of photosystem II (PSII), probably helps stabilize the reaction center. In Stigeoclonium helveticum (Green alga), this protein is Photosystem II reaction center protein Psb30.